A 515-amino-acid chain; its full sequence is ATP synthase subunit alpha (515 aa).

171–178 contacts ATP; the sequence is GDRQTGKT.

Belongs to the ATPase alpha/beta chains family. In terms of assembly, F-type ATPases have 2 components, CF(1) - the catalytic core - and CF(0) - the membrane proton channel. CF(1) has five subunits: alpha(3), beta(3), gamma(1), delta(1), epsilon(1). CF(0) has three main subunits: a(1), b(2) and c(9-12). The alpha and beta chains form an alternating ring which encloses part of the gamma chain. CF(1) is attached to CF(0) by a central stalk formed by the gamma and epsilon chains, while a peripheral stalk is formed by the delta and b chains.

Its subcellular location is the cell inner membrane. The enzyme catalyses ATP + H2O + 4 H(+)(in) = ADP + phosphate + 5 H(+)(out). Produces ATP from ADP in the presence of a proton gradient across the membrane. The alpha chain is a regulatory subunit. In Xylella fastidiosa (strain M12), this protein is ATP synthase subunit alpha.